Consider the following 194-residue polypeptide: ATP-dependent Clp protease proteolytic subunit (194 aa).

Catalysis depends on S98, which acts as the Nucleophile. H123 is an active-site residue.

It belongs to the peptidase S14 family. In terms of assembly, fourteen ClpP subunits assemble into 2 heptameric rings which stack back to back to give a disk-like structure with a central cavity, resembling the structure of eukaryotic proteasomes.

The protein localises to the cytoplasm. It catalyses the reaction Hydrolysis of proteins to small peptides in the presence of ATP and magnesium. alpha-casein is the usual test substrate. In the absence of ATP, only oligopeptides shorter than five residues are hydrolyzed (such as succinyl-Leu-Tyr-|-NHMec, and Leu-Tyr-Leu-|-Tyr-Trp, in which cleavage of the -Tyr-|-Leu- and -Tyr-|-Trp bonds also occurs).. Its function is as follows. Cleaves peptides in various proteins in a process that requires ATP hydrolysis. Has a chymotrypsin-like activity. Plays a major role in the degradation of misfolded proteins. This Clostridium botulinum (strain Hall / ATCC 3502 / NCTC 13319 / Type A) protein is ATP-dependent Clp protease proteolytic subunit.